The chain runs to 189 residues: Peptidyl-tRNA hydrolase (189 aa).

Position 14 (Tyr14) interacts with tRNA. His19 (proton acceptor) is an active-site residue. Residues Tyr64, Asn66, and Asn112 each contribute to the tRNA site.

It belongs to the PTH family. In terms of assembly, monomer.

The protein localises to the cytoplasm. It carries out the reaction an N-acyl-L-alpha-aminoacyl-tRNA + H2O = an N-acyl-L-amino acid + a tRNA + H(+). Functionally, hydrolyzes ribosome-free peptidyl-tRNAs (with 1 or more amino acids incorporated), which drop off the ribosome during protein synthesis, or as a result of ribosome stalling. Its function is as follows. Catalyzes the release of premature peptidyl moieties from peptidyl-tRNA molecules trapped in stalled 50S ribosomal subunits, and thus maintains levels of free tRNAs and 50S ribosomes. The sequence is that of Peptidyl-tRNA hydrolase from Finegoldia magna (strain ATCC 29328 / DSM 20472 / WAL 2508) (Peptostreptococcus magnus).